Here is a 441-residue protein sequence, read N- to C-terminus: Chromosomal replication initiator protein DnaA (441 aa).

The segment at 1 to 80 is domain I, interacts with DnaA modulators; that stretch reads MQNDVLARWE…MHQEISLQFI (80 aa). Residues 80–102 are domain II; it reads ILAGQEVDQPKPKERSSEETYIN. Residues 103-320 are domain III, AAA+ region; that stretch reads ILNPRYTFDT…GALIRVSAFS (218 aa). ATP contacts are provided by Gly-147, Gly-149, Lys-150, and Thr-151. Residues 321-441 are domain IV, binds dsDNA; sequence SLEQRDATPQ…IKELKKRIGE (121 aa).

The protein belongs to the DnaA family. Oligomerizes as a right-handed, spiral filament on DNA at oriC.

The protein localises to the cytoplasm. Functionally, plays an essential role in the initiation and regulation of chromosomal replication. ATP-DnaA binds to the origin of replication (oriC) to initiate formation of the DNA replication initiation complex once per cell cycle. Binds the DnaA box (a 9 base pair repeat at the origin) and separates the double-stranded (ds)DNA. Forms a right-handed helical filament on oriC DNA; dsDNA binds to the exterior of the filament while single-stranded (ss)DNA is stabiized in the filament's interior. The ATP-DnaA-oriC complex binds and stabilizes one strand of the AT-rich DNA unwinding element (DUE), permitting loading of DNA polymerase. After initiation quickly degrades to an ADP-DnaA complex that is not apt for DNA replication. Binds acidic phospholipids. The protein is Chromosomal replication initiator protein DnaA of Desulforamulus reducens (strain ATCC BAA-1160 / DSM 100696 / MI-1) (Desulfotomaculum reducens).